A 189-amino-acid chain; its full sequence is Peptidyl-tRNA hydrolase (189 aa).

Tyrosine 15 serves as a coordination point for tRNA. The active-site Proton acceptor is the histidine 20. Phenylalanine 66, asparagine 68, and asparagine 114 together coordinate tRNA.

Belongs to the PTH family. Monomer.

It is found in the cytoplasm. It carries out the reaction an N-acyl-L-alpha-aminoacyl-tRNA + H2O = an N-acyl-L-amino acid + a tRNA + H(+). In terms of biological role, hydrolyzes ribosome-free peptidyl-tRNAs (with 1 or more amino acids incorporated), which drop off the ribosome during protein synthesis, or as a result of ribosome stalling. Its function is as follows. Catalyzes the release of premature peptidyl moieties from peptidyl-tRNA molecules trapped in stalled 50S ribosomal subunits, and thus maintains levels of free tRNAs and 50S ribosomes. The polypeptide is Peptidyl-tRNA hydrolase (Streptococcus mutans serotype c (strain ATCC 700610 / UA159)).